Here is a 108-residue protein sequence, read N- to C-terminus: uncharacterized protein (108 aa).

Residues 74-108 (TGSKKRDSKANSRSRPSGTITSRGARIGLQGYKSH) are disordered. A compositionally biased stretch (polar residues) spans 84–95 (NSRSRPSGTITS).

This is an uncharacterized protein from Saccharomyces cerevisiae (strain ATCC 204508 / S288c) (Baker's yeast).